We begin with the raw amino-acid sequence, 74 residues long: Kappa-stichotoxin-Hmg1a (74 aa).

The first 22 residues, 1–22 (MKSQMIAAVLLIAFCLCVVVTA), serve as a signal peptide directing secretion. Positions 23-39 (RMELQDVEDMENGFQKR) are excised as a propeptide. A ShKT domain is found at 42–74 (CKDLIPVSECTDIRCRTSMKYRLNLCRKTCGSC). 3 disulfide bridges follow: C42-C74, C51-C67, and C56-C71.

It belongs to the sea anemone type 1 potassium channel toxin family. Type 1a subfamily.

It is found in the secreted. The protein localises to the nematocyst. Functionally, potently blocks the voltage-gated potassium channel Kv1.1/KCNA1 (Ki=75 pM), KcsA (Ki~1 nM) and moderately blocks Kv1.2/KCNA2 (Ki=2.5 nM) and Kv1.3/KCNA3 (Ki=3.1 nM). Also facilitates acetylcholine release at the avian neuromuscular junction. Blockade and dissociation rate are sensitive to voltage. This is Kappa-stichotoxin-Hmg1a from Heteractis magnifica (Magnificent sea anemone).